The sequence spans 937 residues: Diacylglycerol kinase theta (937 aa).

Residues 1–48 are disordered; the sequence is MATAAESGARTWPGSGSPRLGSPAGSPVLGISGRARPGSGPERTGRAI. A phosphoserine mark is found at serine 22 and serine 26. 3 Phorbol-ester/DAG-type zinc fingers span residues 54 to 102, 115 to 162, and 177 to 228; these read GHSF…KTPC, AHCF…CSDC, and HHHW…TPEC. Residues 359–378 form a disordered region; the sequence is GKAGTTEEETSKDSGPGDSV. In terms of domain architecture, Ras-associating spans 390–489; that stretch reads TQEILKIYPD…TRFYVAEARA (100 aa). 2 consecutive short sequence motifs (LXXLL motif) follow at residues 550-554 and 569-573; these read LYMLA and LPDVL. The DAGKc domain maps to 579–716; the sequence is PDCCPLLVFV…MDRWTILLDA (138 aa). The interval 911–937 is disordered; it reads AKQKPRKAGAIRDTRVDTLPAPEGNPL.

The protein belongs to the eukaryotic diacylglycerol kinase family. As to quaternary structure, interacts with RHOA (constitutively activated, GTP-bound); the interaction inhibits DGKQ. Interacts with PRKCE. Interacts with PRKCH. Interacts with PLCB1. Interacts with NR5A1; the interaction requires both LXXLL motifs in DGKQ and is required for full phosphatidic acid-mediated activation of NR5A1. Post-translationally, phosphorylated by PRKCE and PRKCH in vitro. Widely expressed with higher expression in the brain and, to a lesser extent, in the small intestine, duodenum, and liver. In brain, expressed in gray matter. Expression is most intense in the cerebellar cortex and hippocampus, while moderate expression is seen in the olfactory bulb neuronal layers and brain stem nuclei. In the cerebellar cortex, equally expressed in both the Purkinje cell somata and the granule cells.

It is found in the cytoplasm. It localises to the cytosol. Its subcellular location is the cell membrane. The protein resides in the synapse. The protein localises to the cytoskeleton. It is found in the nucleus. It localises to the nucleus speckle. Its subcellular location is the nucleus matrix. It catalyses the reaction a 1,2-diacyl-sn-glycerol + ATP = a 1,2-diacyl-sn-glycero-3-phosphate + ADP + H(+). It carries out the reaction a 1-O-alkyl-sn-glycerol + ATP = a 1-O-alkyl-sn-glycero-3-phosphate + ADP + H(+). The catalysed reaction is 1-O-alkyl-2-acyl-sn-glycerol + ATP = 1-O-alkyl-2-acyl-sn-glycero-3-phosphate + ADP + H(+). The enzyme catalyses 1,2-di-(9Z-octadecenoyl)-sn-glycerol + ATP = 1,2-di-(9Z-octadecenoyl)-sn-glycero-3-phosphate + ADP + H(+). It catalyses the reaction 1-O-hexadecyl-sn-glycerol + ATP = 1-O-hexadecyl-sn-glycero-3-phosphate + ADP + H(+). It carries out the reaction 1-O-hexadecyl-2-acetyl-sn-glycerol + ATP = 1-O-hexadecyl-2-acetyl-sn-glycero-3-phosphate + ADP + H(+). The catalysed reaction is 1-octadecanoyl-2-(5Z,8Z,11Z,14Z-eicosatetraenoyl)-sn-glycerol + ATP = 1-octadecanoyl-2-(5Z,8Z,11Z,14Z-eicosatetraenoyl)-sn-glycero-3-phosphate + ADP + H(+). It participates in lipid metabolism; glycerolipid metabolism. With respect to regulation, activated by phosphatidylserine. Diacylglycerol kinase that converts diacylglycerol/DAG into phosphatidic acid/phosphatidate/PA and regulates the respective levels of these two bioactive lipids. Thereby, acts as a central switch between the signaling pathways activated by these second messengers with different cellular targets and opposite effects in numerous biological processes. Within the adrenocorticotropic hormone signaling pathway, produces phosphatidic acid which in turn activates NR5A1 and subsequent steroidogenic gene transcription. Also functions downstream of the nerve growth factor signaling pathway being specifically activated in the nucleus by the growth factor. Through its diacylglycerol activity also regulates synaptic vesicle endocytosis. The polypeptide is Diacylglycerol kinase theta (Rattus norvegicus (Rat)).